A 314-amino-acid polypeptide reads, in one-letter code: Acetaldehyde dehydrogenase 1 (314 aa).

16-19 (SGNI) contacts NAD(+). Cysteine 134 functions as the Acyl-thioester intermediate in the catalytic mechanism. Residues 165–173 (SAGPGTRAN) and asparagine 292 contribute to the NAD(+) site.

This sequence belongs to the acetaldehyde dehydrogenase family.

The enzyme catalyses acetaldehyde + NAD(+) + CoA = acetyl-CoA + NADH + H(+). This chain is Acetaldehyde dehydrogenase 1 (mhpF), found in Cupriavidus necator (strain ATCC 17699 / DSM 428 / KCTC 22496 / NCIMB 10442 / H16 / Stanier 337) (Ralstonia eutropha).